The chain runs to 97 residues: Large ribosomal subunit protein bL28 (97 aa).

The protein belongs to the bacterial ribosomal protein bL28 family.

The chain is Large ribosomal subunit protein bL28 from Sphingopyxis alaskensis (strain DSM 13593 / LMG 18877 / RB2256) (Sphingomonas alaskensis).